Here is a 413-residue protein sequence, read N- to C-terminus: Arginine biosynthesis bifunctional protein ArgJ (413 aa).

Residues threonine 158, lysine 184, threonine 195, glutamate 285, asparagine 408, and serine 413 each contribute to the substrate site. Residue threonine 195 is the Nucleophile of the active site.

It belongs to the ArgJ family. As to quaternary structure, heterotetramer of two alpha and two beta chains.

It localises to the cytoplasm. The enzyme catalyses N(2)-acetyl-L-ornithine + L-glutamate = N-acetyl-L-glutamate + L-ornithine. The catalysed reaction is L-glutamate + acetyl-CoA = N-acetyl-L-glutamate + CoA + H(+). It functions in the pathway amino-acid biosynthesis; L-arginine biosynthesis; L-ornithine and N-acetyl-L-glutamate from L-glutamate and N(2)-acetyl-L-ornithine (cyclic): step 1/1. It participates in amino-acid biosynthesis; L-arginine biosynthesis; N(2)-acetyl-L-ornithine from L-glutamate: step 1/4. Functionally, catalyzes two activities which are involved in the cyclic version of arginine biosynthesis: the synthesis of N-acetylglutamate from glutamate and acetyl-CoA as the acetyl donor, and of ornithine by transacetylation between N(2)-acetylornithine and glutamate. This is Arginine biosynthesis bifunctional protein ArgJ from Bradyrhizobium diazoefficiens (strain JCM 10833 / BCRC 13528 / IAM 13628 / NBRC 14792 / USDA 110).